We begin with the raw amino-acid sequence, 74 residues long: Ubiquitin-like protein FUBI (74 aa).

The protein belongs to the ubiquitin family.

This chain is Ubiquitin-like protein FUBI (Fau), found in Mus spicilegus (Steppe mouse).